The following is a 285-amino-acid chain: 1-acyl-sn-glycerol-3-phosphate acyltransferase alpha (285 aa).

Positions 1-28 are cleaved as a signal peptide; sequence MELWPGAWTALLLLLLLLLSTLWFCSSS. Topologically, residues 29–34 are lumenal; that stretch reads AKYFFK. Residues 35 to 55 form a helical membrane-spanning segment; that stretch reads MAFYNGWILFLAILAIPVCAV. The Cytoplasmic portion of the chain corresponds to 56 to 124; it reads RGRNVENMKI…PDRCVPIAKR (69 aa). An HXXXXD motif motif is present at residues 101–106; it reads HQSSLD. The chain crosses the membrane as a helical span at residues 125–145; that stretch reads ELLWAGSAGLACWLAGIIFID. The Lumenal portion of the chain corresponds to 146 to 189; it reads RKRTGDAISVMSEVAQTLLTQDVRVWVFPEGTRNHNGSMLPFKR. The short motif at 175-178 is the EGTR motif element; the sequence is EGTR.

The protein belongs to the 1-acyl-sn-glycerol-3-phosphate acyltransferase family. In terms of tissue distribution, widely expressed.

It localises to the endoplasmic reticulum membrane. The catalysed reaction is a 1-acyl-sn-glycero-3-phosphate + an acyl-CoA = a 1,2-diacyl-sn-glycero-3-phosphate + CoA. The enzyme catalyses 1-(9Z-octadecenoyl)-sn-glycero-3-phosphate + (9Z)-octadecenoyl-CoA = 1,2-di-(9Z-octadecenoyl)-sn-glycero-3-phosphate + CoA. It carries out the reaction 1-(9Z-octadecenoyl)-sn-glycero-3-phosphate + hexadecanoyl-CoA = 1-(9Z)-octadecenoyl-2-hexadecanoyl-sn-glycero-3-phosphate + CoA. It catalyses the reaction heptadecanoyl-CoA + 1-(9Z-octadecenoyl)-sn-glycero-3-phosphate = 1-(9Z)-octadecenoyl-2-heptadecanoyl-sn-glycero-3-phosphate + CoA. The catalysed reaction is 1-(9Z-octadecenoyl)-sn-glycero-3-phosphate + octadecanoyl-CoA = 1-(9Z-octadecenoyl)-2-octadecanoyl-sn-glycero-3-phosphate + CoA. The enzyme catalyses 1-(9Z-octadecenoyl)-sn-glycero-3-phosphate + (9Z,12Z)-octadecadienoyl-CoA = 1-(9Z)-octadecenoyl-2-(9Z,12Z)-octadecadienoyl-sn-glycero-3-phosphate + CoA. It carries out the reaction 1-(9Z-octadecenoyl)-sn-glycero-3-phosphate + tetradecanoyl-CoA = 1-(9Z)-octadecenoyl-2-tetradecanoyl-sn-glycero-3-phosphate + CoA. It catalyses the reaction pentadecanoyl-CoA + 1-(9Z-octadecenoyl)-sn-glycero-3-phosphate = 1-(9Z)-octadecenoyl-2-pentadecanoyl-sn-glycero-3-phosphate + CoA. The catalysed reaction is 1-hexadecanoyl-sn-glycero-3-phosphate + (9Z)-octadecenoyl-CoA = 1-hexadecanoyl-2-(9Z-octadecenoyl)-sn-glycero-3-phosphate + CoA. The enzyme catalyses 1-(9Z,12Z,15Z)-octadecatrienoyl-sn-glycero-3-phosphate + (9Z)-octadecenoyl-CoA = 1-(9Z,12Z,15Z)-octadecatrienoyl-2-(9Z)-octadecenoyl-sn-glycero-3-phosphate + CoA. It carries out the reaction 1-(6Z,9Z,12Z-octadecatrienoyl)-sn-glycero-3-phosphate + (9Z)-octadecenoyl-CoA = (6Z,9Z,12Z)-octadecatrienoyl-2-(9Z)-octadecenoyl-sn-glycero-3-phosphate + CoA. It catalyses the reaction 1-eicosanoyl-sn-glycero-3-phosphate + (9Z)-octadecenoyl-CoA = 1-eicosanoyl-2-(9Z)-octadecenoyl-sn-glycero-3-phosphate + CoA. The catalysed reaction is 1-tetradecanoyl-sn-glycerol 3-phosphate + (9Z)-octadecenoyl-CoA = 1-tetradecanoyl-2-(9Z)-octadecenoyl-sn-glycero-3-phosphate + CoA. The enzyme catalyses 1-(9Z-octadecenoyl)-sn-glycero-3-phosphate + (5Z,8Z,11Z,14Z)-eicosatetraenoyl-CoA = 1-(9Z)-octadecenoyl-2-(5Z,8Z,11Z,14Z)-eicosatetraenoyl-sn-glycero-3-phosphate + CoA. It carries out the reaction 1-(9Z-octadecenoyl)-sn-glycero-3-phosphate + dodecanoyl-CoA = 1-(9Z)-octadecenoyl-2-dodecanoyl-sn-glycero-3-phosphate + CoA. It catalyses the reaction (6Z)-octadecenoyl-CoA + 1-(9Z-octadecenoyl)-sn-glycero-3-phosphate = 1-(9Z)-octadecenoyl-2-(6Z)-octadecenoyl-sn-glycero-3-phosphate + CoA. The catalysed reaction is (11Z)-octadecenoyl-CoA + 1-(9Z-octadecenoyl)-sn-glycero-3-phosphate = 1-(9Z)-octadecenoyl-2-(11Z)-octadecenoyl-sn-glycero-3-phosphate + CoA. The enzyme catalyses (9Z)-hexadecenoyl-CoA + 1-(9Z-octadecenoyl)-sn-glycero-3-phosphate = 1-(9Z-octadecenoyl)-2-(9Z-hexadecenoyl)-sn-glycero-3-phosphate + CoA. The protein operates within phospholipid metabolism; CDP-diacylglycerol biosynthesis; CDP-diacylglycerol from sn-glycerol 3-phosphate: step 2/3. Converts 1-acyl-sn-glycerol-3-phosphate (lysophosphatidic acid or LPA) into 1,2-diacyl-sn-glycerol-3-phosphate (phosphatidic acid or PA) by incorporating an acyl moiety at the sn-2 position of the glycerol backbone. The chain is 1-acyl-sn-glycerol-3-phosphate acyltransferase alpha (Agpat1) from Mus musculus (Mouse).